The sequence spans 1122 residues: MLRVYHSNRLDVLEALMEFIVERERLDDPFEPEMILVQSTGMAQWLQMTLSQKFGIAANIDFPLPASFIWDMFVRVLPEIPKESAFNKQSMSWKLMTLLPQLLEREDFTLLRHYLTDDSDKRKLFQLSSKAADLFDQYLVYRPDWLAQWETGHLVEGLGEAQAWQAPLWKALVEYTHQLGQPRWHRANLYQRFIETLESATTCPPGLPSRVFICGISALPPVYLQALQALGKHIEIHLLFTNPCRYYWGDIKDPAYLAKLLTRQRRHSFEDRELPLFRDSENAGQLFNSDGEQDVGNPLLASWGKLGRDYIYLLSDLESSQELDAFVDVTPDNLLHNIQSDILELENRAVAGVNIEEFSRSDNKRPLDPLDSSITFHVCHSPQREVEVLHDRLLAMLEEDPTLTPRDIIVMVADIDSYSPFIQAVFGSAPADRYLPYAISDRRARQSHPVLEAFISLLSLPDSRFVSEDVLALLDVPVLAARFDITEEGLRYLRQWVNESGIRWGIDDDNVRELELPATGQHTWRFGLTRMLLGYAMESAQGEWQSVLPYDESSGLIAELVGHLASLLMQLNIWRRGLAQERPLEEWLPVCRDMLNAFFLPDAETEAAMTLIEQQWQAIIAEGLGAQYGDAVPLSLLRDELAQRLDQERISQRFLAGPVNICTLMPMRSIPFKVVCLLGMNDGVYPRQLAPLGFDLMSQKPKRGDRSRRDDDRYLFLEALISAQQKLYISYIGRSIQDNSERFPSVLVQELIDYIGQSHYLPGDEALNCDESEARVKAHLTCLHTRMPFDPQNYQPGERQSYAREWLPAASQAGKAHSEFVQPLPFTLPETVPLETLQRFWAHPVRAFFQMRLQVNFRTEDSEIPDTEPFILEGLSRYQINQQLLNALVEQDDAERLFRRFRAAGDLPYGAFGEIFWETQCQEMQQLADRVIACRQPGQSMEIDLACNGVQITGWLPQVQPDGLLRWRPSLLSVAQGMQLWLEHLVYCASGGNGESRLFLRKDGEWRFPPLAAEQALHYLSQLIEGYREGMSAPLLVLPESGGAWLKTCYDAQNDAMLDDDSTLQKARTKFLQAYEGNMMVRGEGDDIWYQRLWRQLTPETMEAIVEQSQRFLLPLFRFNQS.

The protein belongs to the RecC family. In terms of assembly, heterotrimer of RecB, RecC and RecD. All subunits contribute to DNA-binding. Interacts with YgbT (Cas1). As to quaternary structure, (Microbial infection) Lambda virus GamS protein interacts with the enzyme without displacing any of the subunits.

With respect to regulation, after reacting with DNA bearing a Chi site the holoenzyme is disassembled and loses exonuclease activity, DNA unwinding and Chi-directed DNA cleavage; RecB remains complexed with ssDNA, which may prevent holoenzyme reassembly. High levels of Mg(2+) (13 mM MgCl(2+)) or incubation with DNase allow holoenzyme reassembly, suggesting it is DNA bound to RecB that prevents reassembly. (Microbial infection) RecBCD is inhibited by the lambda virus gam protein (both GamL and GamS isoforms); in vitro a short preincubation prior to adding DNA results in maximal inhibition. Its function is as follows. A helicase/nuclease that prepares dsDNA breaks (DSB) for recombinational DNA repair. Binds to DSBs and unwinds DNA via a rapid (&gt;1 kb/second) and highly processive (&gt;30 kb) ATP-dependent bidirectional helicase. Unwinds dsDNA until it encounters a Chi (crossover hotspot instigator, 5'-GCTGGTGG-3') sequence from the 3' direction. Cuts ssDNA a few nucleotides 3' to Chi site, by nicking one strand or switching the strand degraded (depending on the reaction conditions). The properties and activities of the enzyme are changed at Chi. The Chi-altered holoenzyme produces a long 3'-ssDNA overhang which facilitates RecA-binding to the ssDNA for homologous DNA recombination and repair. Holoenzyme degrades any linearized DNA that is unable to undergo homologous recombination. In the holoenzyme this subunit almost certainly recognizes the wild-type Chi sequence, when added to isolated RecB increases its ATP-dependent helicase processivity. The RecBC complex requires the RecD subunit for nuclease activity, but can translocate along ssDNA in both directions. The RecBCD complex does not unwind G-quadruplex DNA. The polypeptide is RecBCD enzyme subunit RecC (Escherichia coli (strain K12)).